Here is an 89-residue protein sequence, read N- to C-terminus: Submaxillary mucin (89 aa).

The interval 1-89 (AGSVGRTAGG…VGGSPVATTL (89 aa)) is disordered. O-linked (GalNAc...) serine; partial glycosylation is present at Ser-3. Residues Thr-7 and Thr-14 are each glycosylated (O-linked (GalNAc...) threonine; partial). O-linked (GalNAc...) serine; partial glycosylation occurs at Ser-15. Thr-23 carries O-linked (GalNAc...) threonine; partial glycosylation. Ser-25 is a glycosylation site (O-linked (GalNAc...) serine; partial). Thr-27 carries an O-linked (GalNAc...) threonine; partial glycan. A glycan (O-linked (GalNAc...) serine; partial) is linked at Ser-29. Thr-34 is a glycosylation site (O-linked (GalNAc...) threonine; partial). Ser-38 carries an O-linked (GalNAc...) serine; partial glycan. O-linked (GalNAc...) threonine; partial glycosylation is present at Thr-42. 2 O-linked (GalNAc...) serine; partial glycosylation sites follow: Ser-47 and Ser-49. O-linked (GalNAc...) threonine; partial glycosylation is present at Thr-50. O-linked (GalNAc...) serine; partial glycosylation is present at Ser-54. Over residues 56 to 71 (APGTTLAGRAGTTLGP) the composition is skewed to low complexity. O-linked (GalNAc...) threonine; partial glycosylation is found at Thr-59, Thr-60, Thr-67, and Thr-68. Residues Ser-73 and Ser-76 are each glycosylated (O-linked (GalNAc...) serine; partial). The O-linked (GalNAc...) threonine; partial glycan is linked to Thr-78. Ser-83 is a glycosylation site (O-linked (GalNAc...) serine; partial).

Post-translationally, heavily O-glycosylated at most but not all Ser and Thr residues. Expressed in the submaxillary salivary gland.

It localises to the secreted. The protein is Submaxillary mucin of Canis lupus familiaris (Dog).